A 234-amino-acid chain; its full sequence is UPF0173 metal-dependent hydrolase Msp_0516 (234 aa).

It belongs to the UPF0173 family.

The chain is UPF0173 metal-dependent hydrolase Msp_0516 from Methanosphaera stadtmanae (strain ATCC 43021 / DSM 3091 / JCM 11832 / MCB-3).